We begin with the raw amino-acid sequence, 235 residues long: Elongation factor Tu, chloroplastic (235 aa).

The region spanning lysine 1–glutamate 125 is the tr-type G domain. Asparagine 47–aspartate 50 is a binding site for GTP.

Belongs to the TRAFAC class translation factor GTPase superfamily. Classic translation factor GTPase family. EF-Tu/EF-1A subfamily.

It is found in the plastid. The protein resides in the chloroplast. The enzyme catalyses GTP + H2O = GDP + phosphate + H(+). Its function is as follows. GTP hydrolase that promotes the GTP-dependent binding of aminoacyl-tRNA to the A-site of ribosomes during protein biosynthesis. This chain is Elongation factor Tu, chloroplastic (tufA), found in Mantoniella squamata (Unicellular alga).